A 958-amino-acid chain; its full sequence is Translation initiation factor IF-2 (958 aa).

Low complexity predominate over residues 50–67 (FKPAAAPKVEAKPAAPKV). Disordered regions lie at residues 50 to 224 (FKPA…RIDF) and 288 to 374 (EVVP…HELP). Basic and acidic residues-rich tracts occupy residues 68–89 (SAEK…EEAK), 96–118 (SAEK…EAKP), and 138–153 (FKAE…AERR). Residues 157-169 (KGNNRDQQQNGNR) are compositionally biased toward low complexity. Composition is skewed to basic and acidic residues over residues 185 to 195 (RDNRRFNDQAK) and 290 to 323 (VPEK…DGPR). The segment covering 337 to 346 (NQKNSNWNNN) has biased composition (low complexity). Basic and acidic residues predominate over residues 365–374 (VTERKFHELP). Residues 460 to 627 (ERPPVVTIMG…TVLLVAEIQE (168 aa)) enclose the tr-type G domain. Residues 469-476 (GHVDHGKT) are G1. 469–476 (GHVDHGKT) provides a ligand contact to GTP. The tract at residues 494 to 498 (GITQH) is G2. The segment at 515-518 (DTPG) is G3. GTP-binding positions include 515-519 (DTPGH) and 569-572 (NKID). The interval 569-572 (NKID) is G4. The interval 605-607 (SAK) is G5.

The protein belongs to the TRAFAC class translation factor GTPase superfamily. Classic translation factor GTPase family. IF-2 subfamily.

The protein resides in the cytoplasm. Functionally, one of the essential components for the initiation of protein synthesis. Protects formylmethionyl-tRNA from spontaneous hydrolysis and promotes its binding to the 30S ribosomal subunits. Also involved in the hydrolysis of GTP during the formation of the 70S ribosomal complex. The protein is Translation initiation factor IF-2 of Streptococcus pneumoniae serotype 4 (strain ATCC BAA-334 / TIGR4).